The sequence spans 493 residues: Arginine decarboxylase (493 aa).

Position 229 is an N6-(pyridoxal phosphate)lysine (lysine 229).

Belongs to the Orn/Lys/Arg decarboxylase class-I family. Pyridoxal 5'-phosphate is required as a cofactor.

The protein localises to the cytoplasm. It carries out the reaction L-arginine + H(+) = agmatine + CO2. It functions in the pathway amine and polyamine biosynthesis; agmatine biosynthesis; agmatine from L-arginine: step 1/1. In terms of biological role, catalyzes the formation of agmatine from arginine. The sequence is that of Arginine decarboxylase (speA) from Bacillus anthracis.